Consider the following 151-residue polypeptide: High mobility group B protein 14 (151 aa).

Disordered regions lie at residues 1–62 (MTKR…QTKM) and 132–151 (TKRM…DYSE). Over residues 7–20 (KSGPLSPSCSGGSS) the composition is skewed to low complexity. Residues 35–56 (RSTRLRLQPLRKPKTSPKKKPV) show a composition bias toward basic residues. The segment at residues 63-132 (PKKPATAFFF…EFHRAMTEYT (70 aa)) is a DNA-binding region (HMG box). Over residues 132–142 (TKRMESGAHDE) the composition is skewed to basic and acidic residues. A Phosphoserine modification is found at S150.

This sequence belongs to the HMGB family.

It is found in the nucleus. The sequence is that of High mobility group B protein 14 (HMGB14) from Arabidopsis thaliana (Mouse-ear cress).